Reading from the N-terminus, the 428-residue chain is Patatin-like protein 3 (428 aa).

The PNPLA domain maps to 38-252; sequence LSIDGGGIRG…AANNPTLCAI (215 aa). A GXGXXG motif is present at residues 42–47; it reads GGGIRG. The GXSXG motif lies at 80-84; it reads GTSTG. Serine 82 (nucleophile) is an active-site residue. Aspartate 239 serves as the catalytic Proton acceptor. A DGA/G motif is present at residues 239-241; the sequence is DGG. Serine 423 is subject to Phosphoserine.

The protein belongs to the patatin family. Expressed specifically in the stigma, ovary and funiculus of the ovary.

The protein resides in the cytoplasm. In terms of biological role, possesses non-specific lipolytic acyl hydrolase (LAH) activity. Catalyzes the hydrolysis of the neutral lipids monogalactosyldiacylglycerol (MGDG), digalactosyldiacylglycerol (DGDG) and phosphatidylglycerol (PG), and less efficiently the polar lipids phosphatidylcholine (PC) and phosphatidylinositol (PI), but not the storage lipid triacylglycerol (TAG). May play a role in root development. The polypeptide is Patatin-like protein 3 (PLP3) (Arabidopsis thaliana (Mouse-ear cress)).